Reading from the N-terminus, the 158-residue chain is Transcription elongation factor GreA (158 aa).

A coiled-coil region spans residues 49–73 (QAAREQQGFIEGRIKEIEAKLANAQ).

Belongs to the GreA/GreB family.

Necessary for efficient RNA polymerase transcription elongation past template-encoded arresting sites. The arresting sites in DNA have the property of trapping a certain fraction of elongating RNA polymerases that pass through, resulting in locked ternary complexes. Cleavage of the nascent transcript by cleavage factors such as GreA or GreB allows the resumption of elongation from the new 3'terminus. GreA releases sequences of 2 to 3 nucleotides. This chain is Transcription elongation factor GreA, found in Methylococcus capsulatus (strain ATCC 33009 / NCIMB 11132 / Bath).